The chain runs to 242 residues: MSGHSKWSTIKRKKAKIDSQRGKVFTKLSKEIIIAARNGGADPNGNMRLKAAIEKAKIANIPNDNIQRAIQKGAGGGDGANFEEFSYEGYGPGGIAILLNVATDNRNRTAGEVRHILSKHGGNLGETGCVNWMFDEKGIIIIDRSEVNMSEDDIMLAALEAGAEDVKVEDDSFEISTAPEDLQSVKTALIDQGIPVADADTTMVPQTTVKLQGEDAEKMNKMIELLEDNDDIQEVFTNYEEE.

It belongs to the TACO1 family.

The protein localises to the cytoplasm. The sequence is that of Probable transcriptional regulatory protein Dred_1658 from Desulforamulus reducens (strain ATCC BAA-1160 / DSM 100696 / MI-1) (Desulfotomaculum reducens).